A 311-amino-acid chain; its full sequence is Coproporphyrin III ferrochelatase 1 (311 aa).

Fe-coproporphyrin III is bound by residues Tyr12, Arg29, 45-46 (RY), Ser53, and Tyr124. Residues His182 and Glu263 each coordinate Fe(2+).

It belongs to the ferrochelatase family.

Its subcellular location is the cytoplasm. The catalysed reaction is Fe-coproporphyrin III + 2 H(+) = coproporphyrin III + Fe(2+). It functions in the pathway porphyrin-containing compound metabolism; protoheme biosynthesis. Involved in coproporphyrin-dependent heme b biosynthesis. Catalyzes the insertion of ferrous iron into coproporphyrin III to form Fe-coproporphyrin III. The sequence is that of Coproporphyrin III ferrochelatase 1 from Bacillus cereus (strain ZK / E33L).